The chain runs to 310 residues: Junctional adhesion molecule C (310 aa).

A signal peptide spans 1–31; it reads MALRRPPRLRLCARLPDFFLLLLFRGCLIGA. Residues 32 to 241 lie on the Extracellular side of the membrane; the sequence is VNLKSSNRTP…EQEMEVYDLN (210 aa). The Ig-like V-type domain maps to 35-127; sequence KSSNRTPVVQ…VARNDRKEID (93 aa). 2 disulfide bridges follow: C53-C115 and C160-C219. Residues N104 and N192 are each glycosylated (N-linked (GlcNAc...) asparagine). In terms of domain architecture, Ig-like C2-type spans 139 to 236; sequence PVTPVCRVPK…SARCEEQEME (98 aa). Residues 242–262 traverse the membrane as a helical segment; that stretch reads IGGIIGGVLVVLAVLALITLG. Topologically, residues 263–310 are cytoplasmic; the sequence is ICCAYRRGYFINNKQDGESYKNPGKPDGVNYIRTDEEGDFRHKSSFVI. S-palmitoyl cysteine attachment occurs at residues C264 and C265.

It belongs to the immunoglobulin superfamily. In terms of assembly, interacts with ITGAM. Interacts with GORASP2. Proteolytically cleaved from endothelial cells surface into a soluble form by ADAM10 and ADAM17; the release of soluble JAM3 is increased by pro-inflammatory factors. Post-translationally, S-palmitoylated by ZDHHC7. S-palmitoylation promotes expression at tight junctions. Detected on round and elongated spermatids (at protein level). Highest expression in placenta, brain and kidney. Significant expression is detected on platelets. Expressed in intestinal mucosa cells. Expressed in the vascular endothelium. Found in serum (at protein level). Also detected in the synovial fluid of patients with rheumatoid arthritis, psoriatic arthritis or ostearthritis (at protein level).

It is found in the cell membrane. Its subcellular location is the cell junction. The protein resides in the desmosome. The protein localises to the tight junction. It localises to the secreted. Junctional adhesion protein that mediates heterotypic cell-cell interactions with its cognate receptor JAM2 to regulate different cellular processes. Plays a role in homing and mobilization of hematopoietic stem and progenitor cells within the bone marrow. At the surface of bone marrow stromal cells, it contributes to the retention of the hematopoietic stem and progenitor cells expressing JAM3. Plays a central role in leukocytes extravasation by facilitating transmigration through the endothelium. Plays a role in spermatogenesis where JAM2 and JAM3, which are respectively expressed by Sertoli and germ cells, mediate an interaction between both cell types and play an essential role in the anchorage of germ cells onto Sertoli cells and the assembly of cell polarity complexes during spermatid differentiation. Also functions as a counter-receptor for ITGAM, mediating leukocyte-platelet interactions and is involved in the regulation of transepithelial migration of polymorphonuclear neutrophils (PMN). Plays a role in angiogenesis. Plays a role in the regulation of cell migration. During myogenesis, it is involved in myocyte fusion. In terms of biological role, promotes chemotaxis of vascular endothelial cells and stimulates angiogenesis. The protein is Junctional adhesion molecule C (JAM3) of Homo sapiens (Human).